A 280-amino-acid polypeptide reads, in one-letter code: Eukaryotic translation initiation factor 3 subunit F-1 (280 aa).

The 131-residue stretch at 8 to 138 folds into the MPN domain; the sequence is VRVHPVVLFQ…LRAYICIQLG (131 aa).

The protein belongs to the eIF-3 subunit F family. As to quaternary structure, component of the eukaryotic translation initiation factor 3 (eIF-3) complex. The eIF-3 complex interacts with pix.

The protein localises to the cytoplasm. Functionally, component of the eukaryotic translation initiation factor 3 (eIF-3) complex, which is involved in protein synthesis of a specialized repertoire of mRNAs and, together with other initiation factors, stimulates binding of mRNA and methionyl-tRNAi to the 40S ribosome. The eIF-3 complex specifically targets and initiates translation of a subset of mRNAs involved in cell proliferation. The chain is Eukaryotic translation initiation factor 3 subunit F-1 from Drosophila mojavensis (Fruit fly).